Consider the following 647-residue polypeptide: Threonine--tRNA ligase (647 aa).

The TGS domain occupies 1-63; sequence MYMIQLTFPD…EHDGKIELVM (63 aa). The interval 247-544 is catalytic; that stretch reads DHRKLGKELD…LIEEYKGAFP (298 aa). 3 residues coordinate Zn(2+): Cys-340, His-391, and His-521.

This sequence belongs to the class-II aminoacyl-tRNA synthetase family. Homodimer. It depends on Zn(2+) as a cofactor.

It localises to the cytoplasm. The catalysed reaction is tRNA(Thr) + L-threonine + ATP = L-threonyl-tRNA(Thr) + AMP + diphosphate + H(+). Catalyzes the attachment of threonine to tRNA(Thr) in a two-step reaction: L-threonine is first activated by ATP to form Thr-AMP and then transferred to the acceptor end of tRNA(Thr). Also edits incorrectly charged L-seryl-tRNA(Thr). The protein is Threonine--tRNA ligase of Exiguobacterium sp. (strain ATCC BAA-1283 / AT1b).